A 619-amino-acid polypeptide reads, in one-letter code: MVFKRKLDCLSVGFDFPNIPRAPRSCRRKVLNKRIDHDDDNTQICAIDLLALAGKILQESESSSASSNAFEEIKQEKVENCKTIKSESSDQGNSVSKPTYDISTEKCVVNSCFSFPDSDGVLERTPMSDYKKIHGLMDVGCENKNVNNGFEQGEATDRVGDGGLVTDTCNLEDATALGLQFPKSVCVGGDLKSPSTLDMTPNGSYARHGNHTNLGRKDDDEKFYSYHKLSNKFKSYRSPTIRRIRKSMSSKYWKQVPKDFGYSRADVGVKTLYRKRKSCYGYNAWQREIIYKRRRSPDRSSVVTSDGGLSSGSVSKLPKKGDTVKLSIKSFRIPELFIEVPETATVGSLKRTVMEAVSVLLSGGIRVGVLMHGKKVRDERKTLSQTGISCDENLDNLGFTLEPSPSKVPLPLCSEDPAVPTDPTSLSERSAASPMLDSGIPHADDVIDSRNIVDSNLELVPYQGDISVDEPSSDSKELVPLPELEVKALAIVPLNQKPKRTELAQRRTRRPFSVTEVEALVQAVEELGTGRWRDVKLRAFEDADHRTYVDLKDKWKTLVHTASISPQQRRGEPVPQELLDRVLRAYGYWSQHQGKHQARGASKDPDMNRGGAFESGVSV.

One can recognise a Ubiquitin-like domain in the interval Val324–Pro403. An HTH myb-type domain is found at Ala504–Ser563. The segment at residues Trp532 to Val559 is a DNA-binding region (H-T-H motif). The segment at Gln593–Val619 is disordered.

In terms of assembly, homodimer and heterodimer with TRP1. As to expression, expressed ubiquitously. Highest expression in flowers and roots.

Its subcellular location is the nucleus. Binds specifically to the plant telomeric double-stranded DNA sequences. At least 2 repeats of telomeric sequences are required for binding. Induces DNA bending. The polypeptide is Telomere repeat-binding protein 3 (TRP3) (Arabidopsis thaliana (Mouse-ear cress)).